The chain runs to 159 residues: Large ribosomal subunit protein uL11 (159 aa).

The protein belongs to the universal ribosomal protein uL11 family. In terms of assembly, part of the ribosomal stalk of the 50S ribosomal subunit. Interacts with L10 and the large rRNA to form the base of the stalk. L10 forms an elongated spine to which L12 dimers bind in a sequential fashion forming a multimeric L10(L12)X complex.

Functionally, forms part of the ribosomal stalk which helps the ribosome interact with GTP-bound translation factors. This is Large ribosomal subunit protein uL11 from Methanococcus maripaludis (strain C6 / ATCC BAA-1332).